The following is a 197-amino-acid chain: Na(+)-translocating NADH-quinone reductase subunit E (197 aa).

6 consecutive transmembrane segments (helical) span residues 11-31, 35-55, 76-96, 108-128, 139-159, and 175-195; these read SVFI…FLAV, VSTA…SVPV, FLKF…LEMF, LGIY…VSFM, VVYG…LAGI, and LGIT…FSGI.

Belongs to the NqrDE/RnfAE family. As to quaternary structure, composed of six subunits; NqrA, NqrB, NqrC, NqrD, NqrE and NqrF.

The protein localises to the cell inner membrane. The enzyme catalyses a ubiquinone + n Na(+)(in) + NADH + H(+) = a ubiquinol + n Na(+)(out) + NAD(+). In terms of biological role, NQR complex catalyzes the reduction of ubiquinone-1 to ubiquinol by two successive reactions, coupled with the transport of Na(+) ions from the cytoplasm to the periplasm. NqrA to NqrE are probably involved in the second step, the conversion of ubisemiquinone to ubiquinol. The sequence is that of Na(+)-translocating NADH-quinone reductase subunit E from Neisseria meningitidis serogroup C (strain 053442).